A 456-amino-acid chain; its full sequence is Zinc finger protein 25 (456 aa).

A KRAB domain is found at 8–79; the sequence is VTLKDVIVEF…EVEFPHRGFP (72 aa). 12 consecutive C2H2-type zinc fingers follow at residues 118-140, 146-168, 174-196, 202-224, 230-252, 258-280, 286-308, 314-336, 342-364, 370-392, 398-420, and 426-448; these read CECK…QHTH, YDCD…QKIH, YECK…LRTH, YECN…QKTH, FECT…QKTH, YECK…QRMH, YKCK…QRSH, YECK…QRTH, FECN…QRKH, YECT…QRTH, YACK…QRKH, and YECQ…QKTH.

It belongs to the krueppel C2H2-type zinc-finger protein family.

Its subcellular location is the nucleus. Functionally, may be involved in transcriptional regulation. In Homo sapiens (Human), this protein is Zinc finger protein 25 (ZNF25).